A 437-amino-acid chain; its full sequence is tRNA modification GTPase MnmE (437 aa).

Arginine 21, glutamate 80, and arginine 120 together coordinate (6S)-5-formyl-5,6,7,8-tetrahydrofolate. Residues 218–361 (GFVVVLAGPP…LLDRVAAAAG (144 aa)) form the TrmE-type G domain. Residue asparagine 228 coordinates K(+). Residues 228 to 233 (NAGKST), 247 to 253 (SPIPGTT), and 272 to 275 (DTAG) contribute to the GTP site. Mg(2+) is bound at residue serine 232. K(+)-binding residues include serine 247, isoleucine 249, and threonine 252. Residue threonine 253 participates in Mg(2+) binding. Lysine 437 is a (6S)-5-formyl-5,6,7,8-tetrahydrofolate binding site.

Belongs to the TRAFAC class TrmE-Era-EngA-EngB-Septin-like GTPase superfamily. TrmE GTPase family. In terms of assembly, homodimer. Heterotetramer of two MnmE and two MnmG subunits. K(+) serves as cofactor.

The protein localises to the cytoplasm. Exhibits a very high intrinsic GTPase hydrolysis rate. Involved in the addition of a carboxymethylaminomethyl (cmnm) group at the wobble position (U34) of certain tRNAs, forming tRNA-cmnm(5)s(2)U34. The chain is tRNA modification GTPase MnmE from Methylobacterium sp. (strain 4-46).